Reading from the N-terminus, the 400-residue chain is Probable aspartate/prephenate aminotransferase (400 aa).

Residues Gly-39, Trp-125, and Asn-175 each contribute to the L-aspartate site. Lys-239 is subject to N6-(pyridoxal phosphate)lysine. Arg-375 contacts L-aspartate.

The protein belongs to the class-I pyridoxal-phosphate-dependent aminotransferase family. Homodimer. Pyridoxal 5'-phosphate serves as cofactor.

The protein resides in the cytoplasm. It carries out the reaction L-aspartate + 2-oxoglutarate = oxaloacetate + L-glutamate. The enzyme catalyses L-arogenate + 2-oxoglutarate = prephenate + L-glutamate. Catalyzes the reversible conversion of aspartate and 2-oxoglutarate to glutamate and oxaloacetate. Can also transaminate prephenate in the presence of glutamate. The chain is Probable aspartate/prephenate aminotransferase (aspC) from Rhizobium leguminosarum bv. phaseoli.